A 207-amino-acid polypeptide reads, in one-letter code: Large ribosomal subunit protein bL25 (207 aa).

The protein belongs to the bacterial ribosomal protein bL25 family. CTC subfamily. As to quaternary structure, part of the 50S ribosomal subunit; part of the 5S rRNA/L5/L18/L25 subcomplex. Contacts the 5S rRNA. Binds to the 5S rRNA independently of L5 and L18.

This is one of the proteins that binds to the 5S RNA in the ribosome where it forms part of the central protuberance. In Orientia tsutsugamushi (strain Boryong) (Rickettsia tsutsugamushi), this protein is Large ribosomal subunit protein bL25.